Here is a 348-residue protein sequence, read N- to C-terminus: Gamma-glutamyl hydrolase 1 (348 aa).

The signal sequence occupies residues 1–23 (MIDNNCLYKEELNRNSYSGLAKE). Positions 46–342 (SPDPNLNYRP…RGYDEVYIFT (297 aa)) constitute a Gamma-glutamyl hydrolase domain. Cys156 serves as the catalytic Nucleophile. His269 is an active-site residue.

Belongs to the peptidase C26 family. As to expression, highly expressed in roots and at lower levels in leaves, stems and siliques.

Its subcellular location is the vacuole. It is found in the secreted. The protein localises to the extracellular space. It localises to the cell wall. It catalyses the reaction (6S)-5,6,7,8-tetrahydrofolyl-(gamma-L-Glu)(n) + (n-1) H2O = (6S)-5,6,7,8-tetrahydrofolate + (n-1) L-glutamate. Cleaves the polyglutamate sidechains of folate polyglutamates in the vacuole. Is important for polyglutamyl tail length determination before vacuolar exit. Plays a role in folate stability and intracellular folate content. The protein is Gamma-glutamyl hydrolase 1 (GGH1) of Arabidopsis thaliana (Mouse-ear cress).